A 106-amino-acid polypeptide reads, in one-letter code: Large ribosomal subunit protein eL42 (106 aa).

The protein belongs to the eukaryotic ribosomal protein eL42 family.

This chain is Large ribosomal subunit protein eL42 (RPL44), found in Debaryomyces hansenii (strain ATCC 36239 / CBS 767 / BCRC 21394 / JCM 1990 / NBRC 0083 / IGC 2968) (Yeast).